Consider the following 75-residue polypeptide: DNA-directed RNA polymerase subunit omega (75 aa).

Belongs to the RNA polymerase subunit omega family. The RNAP catalytic core consists of 2 alpha, 1 beta, 1 beta' and 1 omega subunit. When a sigma factor is associated with the core the holoenzyme is formed, which can initiate transcription.

It catalyses the reaction RNA(n) + a ribonucleoside 5'-triphosphate = RNA(n+1) + diphosphate. Its function is as follows. Promotes RNA polymerase assembly. Latches the N- and C-terminal regions of the beta' subunit thereby facilitating its interaction with the beta and alpha subunits. This is DNA-directed RNA polymerase subunit omega from Lysinibacillus sphaericus (strain C3-41).